The chain runs to 434 residues: UDP-glucose 6-dehydrogenase (434 aa).

Residues asparagine 2–methionine 19, valine 11, aspartate 30, lysine 35, threonine 121, and glutamate 152 contribute to the NAD(+) site. Substrate contacts are provided by residues glutamate 148–glutamate 152, lysine 204, asparagine 208, phenylalanine 249–glycine 253, and glycine 257. Catalysis depends on cysteine 260, which acts as the Nucleophile. Position 263 (lysine 263) interacts with NAD(+). Lysine 321 is a substrate binding site. NAD(+) is bound at residue arginine 328.

It belongs to the UDP-glucose/GDP-mannose dehydrogenase family.

The enzyme catalyses UDP-alpha-D-glucose + 2 NAD(+) + H2O = UDP-alpha-D-glucuronate + 2 NADH + 3 H(+). It participates in nucleotide-sugar biosynthesis; UDP-alpha-D-glucuronate biosynthesis; UDP-alpha-D-glucuronate from UDP-alpha-D-glucose: step 1/1. The polypeptide is UDP-glucose 6-dehydrogenase (udg) (Rickettsia prowazekii (strain Madrid E)).